Reading from the N-terminus, the 395-residue chain is HORMA domain-containing protein 1 (395 aa).

Residues 24-226 (QQSLVLVKRL…TPFHTFKVKV (203 aa)) enclose the HORMA domain. The tract at residues 329–395 (DVSESKTRSG…RKFSEPKEYV (67 aa)) is disordered. Residues 344 to 353 (KMANGNQPVK) are compositionally biased toward polar residues. Residues 354–363 (SSKENRKRNQ) show a composition bias toward basic and acidic residues. S377 carries the phosphoserine modification. A Nuclear localization signal motif is present at residues 384–387 (KRRK).

Interacts with HORMAD2. Interacts with IHO1. Post-translationally, phosphorylated at Ser-378 in a SPO11-dependent manner.

It localises to the nucleus. It is found in the chromosome. Functionally, plays a key role in meiotic progression. Regulates 3 different functions during meiosis: ensures that sufficient numbers of processed DNA double-strand breaks (DSBs) are available for successful homology search by increasing the steady-state numbers of single-stranded DSB ends. Promotes synaptonemal-complex formation independently of its role in homology search. Plays a key role in the male mid-pachytene checkpoint and the female meiotic prophase checkpoint: required for efficient build-up of ATR activity on unsynapsed chromosome regions, a process believed to form the basis of meiotic silencing of unsynapsed chromatin (MSUC) and meiotic prophase quality control in both sexes. This is HORMA domain-containing protein 1 (HORMAD1) from Canis lupus familiaris (Dog).